The primary structure comprises 477 residues: Glycogen synthase (477 aa).

An ADP-alpha-D-glucose-binding site is contributed by lysine 15.

This sequence belongs to the glycosyltransferase 1 family. Bacterial/plant glycogen synthase subfamily.

It carries out the reaction [(1-&gt;4)-alpha-D-glucosyl](n) + ADP-alpha-D-glucose = [(1-&gt;4)-alpha-D-glucosyl](n+1) + ADP + H(+). It participates in glycan biosynthesis; glycogen biosynthesis. Functionally, synthesizes alpha-1,4-glucan chains using ADP-glucose. In Salmonella choleraesuis (strain SC-B67), this protein is Glycogen synthase.